The sequence spans 799 residues: Protein scabrous (799 aa).

The N-terminal stretch at 1–51 (MRDWQTFPDLQKKKVSRDHLNCPATMAGSNVLWPILLAVVLLQISVAFVSG) is a signal peptide. The segment at 287–316 (TRKDGSSASVEEESGSQEANQEQTGLETTA) is disordered. Asn-372 carries N-linked (GlcNAc...) asparagine glycosylation. Residues 489–498 (LNKPHKRPHH) are compositionally biased toward basic residues. The segment at 489–509 (LNKPHKRPHHQNVQAQMPQDD) is disordered. A Fibrinogen C-terminal domain is found at 533-737 (AIINKLPHDC…SSRMLVKRLP (205 aa)). Cys-542 and Cys-568 are joined by a disulfide. N-linked (GlcNAc...) asparagine glycans are attached at residues Asn-587, Asn-618, and Asn-660. Cysteines 687 and 700 form a disulfide. N-linked (GlcNAc...) asparagine glycans are attached at residues Asn-744 and Asn-787.

Possesses five pairs of dibasic residues that may be the target of proteolytic processing.

The protein localises to the late endosome. Involved in regulation of neurogenesis. May encode a lateral inhibitor of R8 differentiation. In conjunction with Gp150, promotes Notch activation in response to Delta by regulating acquisition of insensitivity to Delta in a subset of cells. In Drosophila melanogaster (Fruit fly), this protein is Protein scabrous (sca).